The sequence spans 106 residues: Small ribosomal subunit protein bS16 (106 aa).

Positions 84 to 106 (KREARNNPEKAVPRKERKAADGK) are disordered.

This Rhodopseudomonas palustris (strain ATCC BAA-98 / CGA009) protein is Small ribosomal subunit protein bS16.